Here is a 236-residue protein sequence, read N- to C-terminus: 2,3,4,5-tetrahydropyridine-2,6-dicarboxylate N-acetyltransferase (236 aa).

This sequence belongs to the transferase hexapeptide repeat family. DapH subfamily.

It catalyses the reaction (S)-2,3,4,5-tetrahydrodipicolinate + acetyl-CoA + H2O = L-2-acetamido-6-oxoheptanedioate + CoA. It functions in the pathway amino-acid biosynthesis; L-lysine biosynthesis via DAP pathway; LL-2,6-diaminopimelate from (S)-tetrahydrodipicolinate (acetylase route): step 1/3. Catalyzes the transfer of an acetyl group from acetyl-CoA to tetrahydrodipicolinate. In Pediococcus pentosaceus (strain ATCC 25745 / CCUG 21536 / LMG 10740 / 183-1w), this protein is 2,3,4,5-tetrahydropyridine-2,6-dicarboxylate N-acetyltransferase.